A 327-amino-acid polypeptide reads, in one-letter code: Malate dehydrogenase (327 aa).

12–18 (GAAGQIG) provides a ligand contact to NAD(+). Residues Arg93 and Arg99 each contribute to the substrate site. NAD(+)-binding positions include Asn106, Gln113, and 130–132 (VGN). Substrate contacts are provided by Asn132 and Arg163. Residue His188 is the Proton acceptor of the active site.

It belongs to the LDH/MDH superfamily. MDH type 2 family.

It catalyses the reaction (S)-malate + NAD(+) = oxaloacetate + NADH + H(+). Its function is as follows. Catalyzes the reversible oxidation of malate to oxaloacetate. The chain is Malate dehydrogenase from Paraburkholderia phymatum (strain DSM 17167 / CIP 108236 / LMG 21445 / STM815) (Burkholderia phymatum).